The primary structure comprises 1088 residues: Platelet-derived growth factor receptor alpha (1088 aa).

An N-terminal signal peptide occupies residues 1–23 (MGTSQAFLVLSCLLTGPSLIVCQ). 5 consecutive Ig-like C2-type domains span residues 24-112 (LLLP…SEIE), 116-200 (IYIY…FKTS), 201-305 (EFNV…KTVT), 318-409 (PTFG…FELS), and 413-516 (PASI…LKLV). Residues 24 to 527 (LLLPSILPNE…PSLRSELTVA (504 aa)) are Extracellular-facing. The cysteines at positions 48 and 99 are disulfide-linked. N75, N102, and N178 each carry an N-linked (GlcNAc...) asparagine glycan. Intrachain disulfides connect C149–C188 and C234–C289. Residues N352, N358, N457, and N467 are each glycosylated (N-linked (GlcNAc...) asparagine). Residues C434 and C500 are joined by a disulfide bond. The helical transmembrane segment at 528-548 (AAVLVLLVIVIVSLIVLVVIW) threads the bilayer. Topologically, residues 549–1088 (KQKPRYEIRW…SSDLVEDSFL (540 aa)) are cytoplasmic. A phosphotyrosine; by autocatalysis mark is found at Y571 and Y573. Residues 592–953 (LVLGRILGSG…HLSEIVENLL (362 aa)) enclose the Protein kinase domain. ATP-binding positions include 598 to 606 (LGSGAFGKV) and K626. Phosphotyrosine; by autocatalysis occurs at positions 719, 730, 741, 753, 761, and 767. Residue D817 is the Proton acceptor of the active site. A phosphotyrosine; by autocatalysis mark is found at Y848, Y987, and Y1017. Residues 1017-1088 (YIIPLPDIDP…SSDLVEDSFL (72 aa)) are disordered. The segment covering 1040–1058 (SSQTSEESAIETGSSSSTF) has biased composition (polar residues). Over residues 1064–1088 (ETIEDIDMMDDIGIDSSDLVEDSFL) the composition is skewed to acidic residues.

This sequence belongs to the protein kinase superfamily. Tyr protein kinase family. CSF-1/PDGF receptor subfamily. In terms of assembly, interacts with homodimeric PDGFA, PDGFB and PDGFC, and with heterodimers formed by PDGFA and PDGFB. Monomer in the absence of bound ligand. Interaction with dimeric PDGFA, PDGFB and/or PDGFC leads to receptor dimerization, where both PDGFRA homodimers and heterodimers with PDGFRB are observed. Interacts (tyrosine phosphorylated) with SHB (via SH2 domain). Interacts (tyrosine phosphorylated) with SHF (via SH2 domain). Interacts (tyrosine phosphorylated) with SRC (via SH2 domain). Interacts (tyrosine phosphorylated) with PIK3R1. Interacts (tyrosine phosphorylated) with PLCG1 (via SH2 domain). Interacts (tyrosine phosphorylated) with CRK, GRB2 and GRB7. Interacts with CD248; this interaction promotes PDGF receptor signaling pathway. Post-translationally, ubiquitinated, leading to its internalization and degradation. Autophosphorylated on tyrosine residues upon ligand binding. Autophosphorylation occurs in trans, i.e. one subunit of the dimeric receptor phosphorylates tyrosine residues on the other subunit. Phosphorylation at Tyr-730 and Tyr-741 is important for interaction with PIK3R1. Phosphorylation at Tyr-719 and Tyr-753 is important for interaction with PTPN11. Phosphorylation at Tyr-761 is important for interaction with CRK. Phosphorylation at Tyr-571 and Tyr-573 is important for interaction with SRC and SRC family members. Phosphorylation at Tyr-987 and Tyr-1017 is important for interaction with PLCG1.

It is found in the cell membrane. The protein localises to the cell projection. It localises to the cilium. Its subcellular location is the golgi apparatus. The enzyme catalyses L-tyrosyl-[protein] + ATP = O-phospho-L-tyrosyl-[protein] + ADP + H(+). Present in an inactive conformation in the absence of bound ligand. Binding of PDGFA and/or PDGFB leads to dimerization and activation by autophosphorylation on tyrosine residues. Inhibited by imatinib, nilotinib and sorafenib. Its function is as follows. Tyrosine-protein kinase that acts as a cell-surface receptor for PDGFA, PDGFB and PDGFC and plays an essential role in the regulation of embryonic development, cell proliferation, survival and chemotaxis. Depending on the context, promotes or inhibits cell proliferation and cell migration. Plays an important role in the differentiation of bone marrow-derived mesenchymal stem cells. Required for normal skeleton development and cephalic closure during embryonic development. Required for normal development of the mucosa lining the gastrointestinal tract, and for recruitment of mesenchymal cells and normal development of intestinal villi. Plays a role in cell migration and chemotaxis in wound healing. Plays a role in platelet activation, secretion of agonists from platelet granules, and in thrombin-induced platelet aggregation. Binding of its cognate ligands - homodimeric PDGFA, homodimeric PDGFB, heterodimers formed by PDGFA and PDGFB or homodimeric PDGFC -leads to the activation of several signaling cascades; the response depends on the nature of the bound ligand and is modulated by the formation of heterodimers between PDGFRA and PDGFRB. Phosphorylates PIK3R1, PLCG1, and PTPN11. Activation of PLCG1 leads to the production of the cellular signaling molecules diacylglycerol and inositol 1,4,5-trisphosphate, mobilization of cytosolic Ca(2+) and the activation of protein kinase C. Phosphorylates PIK3R1, the regulatory subunit of phosphatidylinositol 3-kinase, and thereby mediates activation of the AKT1 signaling pathway. Mediates activation of HRAS and of the MAP kinases MAPK1/ERK2 and/or MAPK3/ERK1. Promotes activation of STAT family members STAT1, STAT3 and STAT5A and/or STAT5B. Receptor signaling is down-regulated by protein phosphatases that dephosphorylate the receptor and its down-stream effectors, and by rapid internalization of the activated receptor. The protein is Platelet-derived growth factor receptor alpha (Pdgfra) of Rattus norvegicus (Rat).